Here is a 472-residue protein sequence, read N- to C-terminus: Probable low-salt glycan biosynthesis flippase Agl15 (472 aa).

A run of 13 helical transmembrane segments spans residues 8–28, 38–58, 77–97, 109–129, 164–184, 209–229, 244–264, 289–309, 315–335, 354–374, 375–395, 408–428, and 434–454; these read IKLFIANIFGAGLQFLGITFF, GVFFLFQALLGIVAIPADFGL, SSAIILKLIPISLIILSIVVF, FAVYLALAIILQETAQLAVSV, AEALIYSLLAGMVVTLAWGLS, VVSSIGGYFYSWMDVAIIGIF, VTAITMLFSQAVASTIFPQVS, LVIPAFFGILVFSDEIMGIVF, IASYVLIILAGEKILQSVHVI, VISVVLNLILNVILILSFGIV, GAAVATALSFAVNTVLHAHYL, IGWCTVSSLIMAGVLFGFKTL, and LIQLFIGIFFGMLVYTTITLL.

This sequence belongs to the AglR/Agl15 family.

It is found in the cell membrane. It participates in protein modification; protein glycosylation. Its pathway is cell surface structure biogenesis; S-layer biogenesis. In terms of biological role, flippase involved in N-glycan biosynthetic pathway that takes place under low-salt conditions (1.75 M instead of 3.4 M). Participates in the formation of the tetrasaccharide present at 'Asn-532' of S-layer glycoprotein Csg, consisting of a sulfated hexose, 2 hexoses and rhamnose. Probably moves the tetrasaccharide from the cytosolic to the extracytosolic side of the membrane. This is Probable low-salt glycan biosynthesis flippase Agl15 (agl15) from Haloferax volcanii (strain ATCC 29605 / DSM 3757 / JCM 8879 / NBRC 14742 / NCIMB 2012 / VKM B-1768 / DS2) (Halobacterium volcanii).